Reading from the N-terminus, the 337-residue chain is Sideroflexin-4 (337 aa).

Serine 2 is subject to N-acetylserine. The next 3 membrane-spanning stretches (helical) occupy residues 111 to 131 (AAFL…LKGI), 133 to 153 (SVIL…SING), and 165 to 185 (SLLM…PQFV). At lysine 197 the chain carries N6-acetyllysine. 2 helical membrane-spanning segments follow: residues 251–271 (ASRI…TYFF) and 293–313 (VLAM…IGQI).

It belongs to the sideroflexin family.

It is found in the mitochondrion inner membrane. Its function is as follows. Mitochondrial amino-acid transporter. Does not act as a serine transporter: not able to mediate transport of serine into mitochondria. In Homo sapiens (Human), this protein is Sideroflexin-4.